The chain runs to 393 residues: NAD(P)H-quinone oxidoreductase subunit H, chloroplastic (393 aa).

It belongs to the complex I 49 kDa subunit family. As to quaternary structure, NDH is composed of at least 16 different subunits, 5 of which are encoded in the nucleus.

It is found in the plastid. The protein resides in the chloroplast thylakoid membrane. The enzyme catalyses a plastoquinone + NADH + (n+1) H(+)(in) = a plastoquinol + NAD(+) + n H(+)(out). The catalysed reaction is a plastoquinone + NADPH + (n+1) H(+)(in) = a plastoquinol + NADP(+) + n H(+)(out). NDH shuttles electrons from NAD(P)H:plastoquinone, via FMN and iron-sulfur (Fe-S) centers, to quinones in the photosynthetic chain and possibly in a chloroplast respiratory chain. The immediate electron acceptor for the enzyme in this species is believed to be plastoquinone. Couples the redox reaction to proton translocation, and thus conserves the redox energy in a proton gradient. In Guizotia abyssinica (Niger), this protein is NAD(P)H-quinone oxidoreductase subunit H, chloroplastic.